A 186-amino-acid polypeptide reads, in one-letter code: Biphenyl dioxygenase subunit beta (186 aa).

Belongs to the bacterial ring-hydroxylating dioxygenase beta subunit family. In terms of assembly, heterohexamer consisting of 3 BphA subunits and 3 BphE subunits. A ferredoxin (BphF) and a ferredoxin reductase (BphG) must be present to obtain activity.

It catalyses the reaction biphenyl + NADH + O2 + H(+) = (2R,3S)-3-phenylcyclohexa-3,5-diene-1,2-diol + NAD(+). It participates in xenobiotic degradation; biphenyl degradation; 2-hydroxy-2,4-pentadienoate and benzoate from biphenyl: step 1/4. The beta subunit may be responsible for the substrate specificity of the enzyme. The sequence is that of Biphenyl dioxygenase subunit beta (bphE) from Comamonas testosteroni (Pseudomonas testosteroni).